The primary structure comprises 553 residues: Putative transport protein YidE (553 aa).

A run of 5 helical transmembrane segments spans residues 4–24 (IALTVSILALVAVVGLFIGNV), 28–48 (GIGLGIGGVLFGGIIVGHFVS), 65–85 (FGLILFVYTIGIQVGPGFFAS), 95–115 (LFAVLIVIIGGLVTAILHKLF), and 158–178 (MSYAMAYPFGICGILFTMWML). 2 RCK C-terminal domains span residues 191 to 276 (QQHE…VIGQ) and 279 to 361 (DTSL…VLGN). The next 6 helical transmembrane spans lie at 371–391 (MLPVFIGIGLGVLLGSIPVFV), 393–413 (GFPAALKLGLAGGLLIMALIL), 431–448 (NLALRELGIVLFLSVVGL), 464–484 (LSWIGYGALITAVPLITVGIL), 493–513 (YLTMCGMLAGSMTDPPALAFA), and 533–553 (LVMFLRIITPQLLAVLFWSIG).

This sequence belongs to the AAE transporter (TC 2.A.81) family. YidE subfamily.

Its subcellular location is the cell membrane. The polypeptide is Putative transport protein YidE (Shigella sonnei (strain Ss046)).